A 160-amino-acid chain; its full sequence is Large ribosomal subunit protein uL18 (160 aa).

The protein belongs to the universal ribosomal protein uL18 family. As to quaternary structure, part of the 50S ribosomal subunit. Contacts the 5S and 23S rRNAs.

Its function is as follows. This is one of the proteins that bind and probably mediate the attachment of the 5S RNA into the large ribosomal subunit, where it forms part of the central protuberance. The sequence is that of Large ribosomal subunit protein uL18 from Thermoplasma volcanium (strain ATCC 51530 / DSM 4299 / JCM 9571 / NBRC 15438 / GSS1).